A 329-amino-acid chain; its full sequence is GTP 3',8-cyclase (329 aa).

The Radical SAM core domain maps to 8 to 234 (AFARKFYYLR…QLRQRSDGPA (227 aa)). Arg-17 contacts GTP. The [4Fe-4S] cluster site is built by Cys-24 and Cys-28. An S-adenosyl-L-methionine-binding site is contributed by Tyr-30. Residue Cys-31 coordinates [4Fe-4S] cluster. Arg-68 contacts GTP. Residue Gly-72 participates in S-adenosyl-L-methionine binding. Thr-99 lines the GTP pocket. Position 123 (Ser-123) interacts with S-adenosyl-L-methionine. Lys-160 contributes to the GTP binding site. Position 194 (Met-194) interacts with S-adenosyl-L-methionine. Residues Cys-257 and Cys-260 each contribute to the [4Fe-4S] cluster site. 262–264 (RLR) contacts GTP. [4Fe-4S] cluster is bound at residue Cys-274.

This sequence belongs to the radical SAM superfamily. MoaA family. As to quaternary structure, monomer and homodimer. [4Fe-4S] cluster is required as a cofactor.

It catalyses the reaction GTP + AH2 + S-adenosyl-L-methionine = (8S)-3',8-cyclo-7,8-dihydroguanosine 5'-triphosphate + 5'-deoxyadenosine + L-methionine + A + H(+). It functions in the pathway cofactor biosynthesis; molybdopterin biosynthesis. Catalyzes the cyclization of GTP to (8S)-3',8-cyclo-7,8-dihydroguanosine 5'-triphosphate. This Escherichia coli O127:H6 (strain E2348/69 / EPEC) protein is GTP 3',8-cyclase.